A 569-amino-acid polypeptide reads, in one-letter code: Arginine--tRNA ligase (569 aa).

The short motif at 123-133 (ANPNGPLHVGH) is the 'HIGH' region element.

It belongs to the class-I aminoacyl-tRNA synthetase family.

It is found in the cytoplasm. It catalyses the reaction tRNA(Arg) + L-arginine + ATP = L-arginyl-tRNA(Arg) + AMP + diphosphate. This Methanosarcina mazei (strain ATCC BAA-159 / DSM 3647 / Goe1 / Go1 / JCM 11833 / OCM 88) (Methanosarcina frisia) protein is Arginine--tRNA ligase.